The following is a 425-amino-acid chain: Histidine--tRNA ligase (425 aa).

It belongs to the class-II aminoacyl-tRNA synthetase family. In terms of assembly, homodimer.

It localises to the cytoplasm. It catalyses the reaction tRNA(His) + L-histidine + ATP = L-histidyl-tRNA(His) + AMP + diphosphate + H(+). The sequence is that of Histidine--tRNA ligase from Desulforapulum autotrophicum (strain ATCC 43914 / DSM 3382 / VKM B-1955 / HRM2) (Desulfobacterium autotrophicum).